The sequence spans 452 residues: Trigger factor (452 aa).

Positions 170-256 (NSIVKVDFVE…IKSIKKRDLP (87 aa)) constitute a PPIase FKBP-type domain.

Belongs to the FKBP-type PPIase family. Tig subfamily.

Its subcellular location is the cytoplasm. It catalyses the reaction [protein]-peptidylproline (omega=180) = [protein]-peptidylproline (omega=0). Its function is as follows. Involved in protein export. Acts as a chaperone by maintaining the newly synthesized protein in an open conformation. Functions as a peptidyl-prolyl cis-trans isomerase. In Borrelia garinii subsp. bavariensis (strain ATCC BAA-2496 / DSM 23469 / PBi) (Borreliella bavariensis), this protein is Trigger factor.